A 132-amino-acid polypeptide reads, in one-letter code: Small ribosomal subunit protein uS8 (132 aa).

The protein belongs to the universal ribosomal protein uS8 family. As to quaternary structure, part of the 30S ribosomal subunit. Contacts proteins S5 and S12.

In terms of biological role, one of the primary rRNA binding proteins, it binds directly to 16S rRNA central domain where it helps coordinate assembly of the platform of the 30S subunit. This Bifidobacterium animalis subsp. lactis (strain AD011) protein is Small ribosomal subunit protein uS8.